A 386-amino-acid polypeptide reads, in one-letter code: Methionine aminotransferase (386 aa).

Residue K236 is modified to N6-(pyridoxal phosphate)lysine.

It belongs to the class-I pyridoxal-phosphate-dependent aminotransferase family. Homodimer. It depends on pyridoxal 5'-phosphate as a cofactor.

It is found in the cytoplasm. The catalysed reaction is a 2-oxocarboxylate + L-methionine = 4-methylsulfanyl-2-oxobutanoate + an L-alpha-amino acid. Functionally, shows aminotransferase activity with methionine and histidine as substrates, and to a lesser extent also with phenylalanine. In Escherichia coli (strain K12), this protein is Methionine aminotransferase (ybdL).